The following is a 122-amino-acid chain: Lysozyme (122 aa).

Positions 3-118 constitute an I-type lysozyme domain; sequence GGIVSQRCLS…WNRLQKISGC (116 aa). Cystine bridges form between C10–C86, C13–C118, C15–C21, C26–C35, C48–C68, C58–C64, and C82–C100. The active-site Proton donor is E18. The active-site Nucleophile is the D29. 41–47 contributes to the substrate binding site; sequence KEAYWID. Substrate is bound by residues Y72, H93, 93-95, and K102; that span reads HNG.

This sequence belongs to the glycosyl hydrolase 22 family. Type-I lysozyme subfamily. Monomer.

The protein resides in the secreted. It catalyses the reaction Hydrolysis of (1-&gt;4)-beta-linkages between N-acetylmuramic acid and N-acetyl-D-glucosamine residues in a peptidoglycan and between N-acetyl-D-glucosamine residues in chitodextrins.. Functionally, has bacteriolytic activity against Gram-positive bacteria M.luteus. Also has chitinase activity. The chain is Lysozyme from Meretrix lusoria (Hard clam).